Reading from the N-terminus, the 895-residue chain is ABC-transporter-regulating transcription factor (895 aa).

The segment at residues 69-96 (CDMCRKKKIKCDGKMPKCSHCTNYKTDC) is a DNA-binding region (zn(2)-C6 fungal-type). Residues 156-218 (HASGSNTPHN…QKESETEVEG (63 aa)) form a disordered region. Positions 158-207 (SGSNTPHNPQKINIPSQSQIAMSQQNSSSHYSTPRLESQSSPRTAATSPE) are enriched in polar residues. A helical transmembrane segment spans residues 648-668 (CVWLILYYPVSALVTLFANIL). A disordered region spans residues 726-813 (ESYSKKKRKS…TGVSTNIPPN (88 aa)). Over residues 755 to 765 (PSTTQPTQAPS) the composition is skewed to low complexity.

In terms of assembly, interacts with ncaA.

It is found in the nucleus. Its subcellular location is the membrane. Functionally, transcription factor that regulates expression of the genes related to ergosterol biosynthesis, including erg3B, erg24A, erg25A, as well as cyp51A that encodes a target protein of azoles. In coordination with ffmA and ncaA, is responsible for the expression of the ABC transporter abcC/cdr1B/abcG1 related to azole resistance. Directly binds both the cyp51A and abcC/cdr1B/abcG1 promoters at a conserved 34 bp region called the atrR response element (ATRE). AtrR also binds to the promoter regions of both the sterol response transcription factor srbA and atrR genes themselves, the latter suggesting the possibility that atrR is autoregulated. Also regulates iron uptake, most likely via cooperation with SrbA. AtrR is necessary for hypoxia adaptation and virulence. The polypeptide is ABC-transporter-regulating transcription factor (Aspergillus fumigatus (strain ATCC MYA-4609 / CBS 101355 / FGSC A1100 / Af293) (Neosartorya fumigata)).